Here is a 328-residue protein sequence, read N- to C-terminus: UPF0194 membrane protein YPTS_1292 (328 aa).

The N-terminal stretch at 1–22 is a signal peptide; it reads MNRKKIIVAAVIVALLATLAYG. Coiled coils occupy residues 80 to 109 and 142 to 209; these read YLNA…REEE and AVSA…ILLA.

The protein belongs to the UPF0194 family.

The protein resides in the periplasm. This Yersinia pseudotuberculosis serotype IB (strain PB1/+) protein is UPF0194 membrane protein YPTS_1292.